Here is a 1142-residue protein sequence, read N- to C-terminus: Protein lin-25 (1142 aa).

Residues 600-613 are compositionally biased toward acidic residues; that stretch reads IEEEIEEEEEDIEP. The interval 600–706 is disordered; the sequence is IEEEIEEEEE…EKPKEPLEPT (107 aa). 3 stretches are compositionally biased toward basic and acidic residues: residues 614-627, 652-662, and 679-703; these read EVVKEMKESGTEKE, DEQKTEEKMDT, and DPPKVEEPAERINQEKPEEKPKEPL.

It is found in the nucleus. It localises to the cytoplasm. Its function is as follows. Participates in the inductive signaling pathway downstream of let-60 Ras and the RAF/MAP kinase cascade to regulate specification and differentiation of many cell types. Positively regulates the fate of vulval precursor cells. Required for induction of the P12 and excretory duct cell fates. In males, it is also required for proper formation of spicules. Does not function in the signaling pathway that promotes exit from pachytene. In Caenorhabditis briggsae, this protein is Protein lin-25.